The primary structure comprises 267 residues: Neural/ectodermal development factor IMP-L2 (267 aa).

A signal peptide spans 1–25; sequence MEAKMNLHVCALALLLFGSIATVRG. Ig-like C2-type domains lie at 48–149 and 174–260; these read PRNR…KTIY and PRII…TFVY. 2 disulfides stabilise this stretch: cysteine 80–cysteine 139 and cysteine 195–cysteine 244.

In terms of tissue distribution, detected in several sites including the ventral neuroectoderm, the tracheal pits, the pharynx and esophagus, and specific neuronal cell bodies, where it is primarily expressed.

It is found in the secreted. The protein localises to the extracellular space. Its function is as follows. Essential developmental role during embryogenesis, in particular the normal development of the nervous system. May be involved in some aspect of cell adhesion. The chain is Neural/ectodermal development factor IMP-L2 (ImpL2) from Drosophila melanogaster (Fruit fly).